We begin with the raw amino-acid sequence, 713 residues long: Glycine--tRNA ligase beta subunit (713 aa).

This sequence belongs to the class-II aminoacyl-tRNA synthetase family. As to quaternary structure, tetramer of two alpha and two beta subunits.

The protein resides in the cytoplasm. The enzyme catalyses tRNA(Gly) + glycine + ATP = glycyl-tRNA(Gly) + AMP + diphosphate. This Leptothrix cholodnii (strain ATCC 51168 / LMG 8142 / SP-6) (Leptothrix discophora (strain SP-6)) protein is Glycine--tRNA ligase beta subunit.